The sequence spans 699 residues: Zinc finger protein 782 (699 aa).

The KRAB domain maps to 8–79 (VSFQDVTVEF…EKEKGFLSRN (72 aa)). Residues 75-95 (FLSRNSPEDSQPDEISEKSPE) are disordered. The segment at 279-307 (CFCRITHKTLTGGKSFSQKSHIREHHRVH) adopts a C2H2-type 1; degenerate zinc-finger fold. A C2H2-type 2; degenerate zinc finger spans residues 316-332 (GKSFNRNSTLPVHQRTH). The segment at 337–360 (YSDYHPCTETFSYQSTFSVHQKVH) adopts a C2H2-type 3; degenerate zinc-finger fold. Residues 366–388 (YEYNECGKSCSMNSHLIWPQKSH) form a C2H2-type 4; degenerate zinc finger. 11 C2H2-type zinc fingers span residues 394 to 416 (YECP…QRTH), 422 to 444 (YKCD…QRTH), 450 to 472 (FECH…QRTH), 478 to 500 (FECN…RRTH), 506 to 528 (YKCD…HRTH), 534 to 556 (YKCN…HRIH), 562 to 584 (YKCN…HRTH), 590 to 612 (YQCE…QRTH), 618 to 640 (YECN…QRTH), 646 to 668 (YNCN…QRTH), and 674 to 696 (YKCD…QKAH).

It belongs to the krueppel C2H2-type zinc-finger protein family.

The protein resides in the nucleus. In terms of biological role, may be involved in transcriptional regulation. The sequence is that of Zinc finger protein 782 (ZNF782) from Homo sapiens (Human).